Here is a 154-residue protein sequence, read N- to C-terminus: S-ribosylhomocysteine lyase (154 aa).

Fe cation contacts are provided by His-57, His-61, and Cys-124.

It belongs to the LuxS family. In terms of assembly, homodimer. Fe cation serves as cofactor.

It catalyses the reaction S-(5-deoxy-D-ribos-5-yl)-L-homocysteine = (S)-4,5-dihydroxypentane-2,3-dione + L-homocysteine. Functionally, involved in the synthesis of autoinducer 2 (AI-2) which is secreted by bacteria and is used to communicate both the cell density and the metabolic potential of the environment. The regulation of gene expression in response to changes in cell density is called quorum sensing. Catalyzes the transformation of S-ribosylhomocysteine (RHC) to homocysteine (HC) and 4,5-dihydroxy-2,3-pentadione (DPD). This is S-ribosylhomocysteine lyase from Exiguobacterium sibiricum (strain DSM 17290 / CCUG 55495 / CIP 109462 / JCM 13490 / 255-15).